The following is a 109-amino-acid chain: Spermidine export protein MdtI (109 aa).

Helical transmembrane passes span 6 to 26, 36 to 56, 64 to 84, and 88 to 108; these read FYPIAFLILAVMLEIVANILL, WLGILSLLSVLGAFSALAQAV, AYAMWGGFGIAATVAAGWILF, and LNYKGWIGLILLLAGMVMIKL.

Belongs to the drug/metabolite transporter (DMT) superfamily. Small multidrug resistance (SMR) (TC 2.A.7.1) family. MdtI subfamily. Forms a complex with MdtJ.

Its subcellular location is the cell inner membrane. Functionally, catalyzes the excretion of spermidine. This Yersinia pseudotuberculosis serotype I (strain IP32953) protein is Spermidine export protein MdtI.